We begin with the raw amino-acid sequence, 317 residues long: Protoheme IX farnesyltransferase (317 aa).

Transmembrane regions (helical) follow at residues 33–53 (VMSL…GEIN), 54–74 (PILG…SGAL), 117–137 (VILG…TIFF), 154–174 (IVIG…CVTG), 181–201 (VILF…LALF), 242–262 (FFTG…SAIF), and 285–305 (MFAY…ADHF).

This sequence belongs to the UbiA prenyltransferase family. Protoheme IX farnesyltransferase subfamily.

Its subcellular location is the cell inner membrane. It catalyses the reaction heme b + (2E,6E)-farnesyl diphosphate + H2O = Fe(II)-heme o + diphosphate. It participates in porphyrin-containing compound metabolism; heme O biosynthesis; heme O from protoheme: step 1/1. Its function is as follows. Converts heme B (protoheme IX) to heme O by substitution of the vinyl group on carbon 2 of heme B porphyrin ring with a hydroxyethyl farnesyl side group. This is Protoheme IX farnesyltransferase from Agrobacterium fabrum (strain C58 / ATCC 33970) (Agrobacterium tumefaciens (strain C58)).